Reading from the N-terminus, the 217-residue chain is Large ribosomal subunit protein uL1 (217 aa).

The protein belongs to the universal ribosomal protein uL1 family.

The protein is Large ribosomal subunit protein uL1 (RPL10A) of Eremothecium gossypii (strain ATCC 10895 / CBS 109.51 / FGSC 9923 / NRRL Y-1056) (Yeast).